The following is a 715-amino-acid chain: Polyribonucleotide nucleotidyltransferase (715 aa).

Mg(2+) contacts are provided by Asp490 and Asp496. In terms of domain architecture, KH spans 557–616 (PRIETMTIPTDKIREVIGSGGKVIREIVETSGAKVDISDDGTIKIASANADSIKKAYDMI). The region spanning 626-694 (GKIYVGKVVK…DRGKVRLGMK (69 aa)) is the S1 motif domain.

This sequence belongs to the polyribonucleotide nucleotidyltransferase family. Mg(2+) is required as a cofactor.

The protein resides in the cytoplasm. It carries out the reaction RNA(n+1) + phosphate = RNA(n) + a ribonucleoside 5'-diphosphate. Functionally, involved in mRNA degradation. Catalyzes the phosphorolysis of single-stranded polyribonucleotides processively in the 3'- to 5'-direction. The protein is Polyribonucleotide nucleotidyltransferase of Paracoccus denitrificans (strain Pd 1222).